A 190-amino-acid chain; its full sequence is MSRHVFLTGPPGVGKTTLIQKAIEVLQSSGLPVDGFYTQEVRQEGKRIGFDVVTLSGAQGPLSRVGSQPLPGKPECRVGQYVVNLDSFEQLALPVLRNAGSSCGPKHRVCIIDEIGKMELFSQPFIQAVRQMLSTPGIIVVGTIPVPKGKPLALVEEIRKRRDVKVFNVTRDNRNSLLPDIVAVVQSSRT.

ATP-binding positions include 9 to 16 (GPPGVGKT) and 109 to 116 (VCIIDEIG). Lys-165 is modified (N6-acetyllysine).

This sequence belongs to the THEP1 NTPase family. Monomer.

The enzyme catalyses a ribonucleoside 5'-triphosphate + H2O = a ribonucleoside 5'-diphosphate + phosphate + H(+). It carries out the reaction 5-methyl-UTP + H2O = 5-methyl-UDP + phosphate + H(+). The catalysed reaction is CTP + H2O = CDP + phosphate + H(+). It catalyses the reaction ATP + H2O = ADP + phosphate + H(+). The enzyme catalyses GTP + H2O = GDP + phosphate + H(+). Functionally, has nucleotide phosphatase activity towards ATP, GTP, CTP, TTP and UTP. Hydrolyzes nucleoside diphosphates with lower efficiency. The protein is Cancer-related nucleoside-triphosphatase homolog of Mus musculus (Mouse).